Consider the following 573-residue polypeptide: Solute carrier family 41 member 2 (573 aa).

The Extracellular segment spans residues 1 to 162 (MTNCKGRSTI…KESSSIMALQ (162 aa)). The chain crosses the membrane as a helical span at residues 163–183 (ILVPFLLAGFGTVTAGMVLDI). At 184–195 (VQHWDVFKNVTE) the chain is on the cytoplasmic side. A helical membrane pass occupies residues 196 to 216 (VFILVPALLGLKGNLEMTLAS). Residues 217 to 245 (RLSTAVNIGKMDSPIEKWNLIIGNLALKQ) lie on the Extracellular side of the membrane. Residues 246–266 (VQATVVGFLAAVAAVILGWIP) form a helical membrane-spanning segment. The Cytoplasmic portion of the chain corresponds to 267 to 282 (EGKYSFSHSILLCSSS). Residues 283 to 303 (VATAFIASLLQGIIMVGVIVG) traverse the membrane as a helical segment. Topologically, residues 304-313 (SKKTGINPDN) are extracellular. The helical transmembrane segment at 314–334 (VATPIAASFGDLITLAILAWI) threads the bilayer. Residues 335-347 (SQGLYTCLETYYY) are Cytoplasmic-facing. The helical transmembrane segment at 348 to 368 (VSPLVGAFFLALTPMGIVIAA) threads the bilayer. At 369–376 (KHPATRTV) the chain is on the extracellular side. The chain crosses the membrane as a helical span at residues 377–397 (LHSGWEPVITAMIISSIGGLI). The Cytoplasmic portion of the chain corresponds to 398-406 (LDTTVSDPN). A helical transmembrane segment spans residues 407–427 (LVGIVVYTPVINGIGGNLVAI). Over 428-469 (QASRISTYLHLHSIPGELPEEAKGCYYPCRTYYGTGVNNKSA) the chain is Extracellular. The helical transmembrane segment at 470–490 (QVLLLLVIPGHLIFLYTIHLM) threads the bilayer. Topologically, residues 491–499 (KSGHTSLTP) are cytoplasmic. Residues 500–520 (IFIAVYLFAALLQVFTLLWIA) form a helical membrane-spanning segment. At 521-543 (DWMVHHFWKKGKDPDSFSIPYLT) the chain is on the extracellular side. A helical transmembrane segment spans residues 544 to 564 (ALGDLLGTALLAVGFHFLWLI). Residues 565–573 (GDRDGDVGD) lie on the Cytoplasmic side of the membrane.

It belongs to the SLC41A transporter family.

It is found in the cell membrane. The enzyme catalyses Mg(2+)(in) = Mg(2+)(out). The catalysed reaction is Mn(2+)(in) = Mn(2+)(out). It carries out the reaction Co(2+)(in) = Co(2+)(out). It catalyses the reaction Ni(2+)(in) = Ni(2+)(out). The enzyme catalyses Fe(2+)(in) = Fe(2+)(out). In terms of biological role, acts as a plasma-membrane magnesium transporter. Can also mediate the transport of other divalent metal cations in an order of Ba(2+) &gt; Ni(2+) &gt; Co(2+) &gt; Fe(2+) &gt; Mn(2+). The polypeptide is Solute carrier family 41 member 2 (SLC41A2) (Gallus gallus (Chicken)).